Consider the following 124-residue polypeptide: Small ribosomal subunit protein uS12 (124 aa).

Asp89 is modified (3-methylthioaspartic acid).

It belongs to the universal ribosomal protein uS12 family. In terms of assembly, part of the 30S ribosomal subunit. Contacts proteins S8 and S17. May interact with IF1 in the 30S initiation complex.

Functionally, with S4 and S5 plays an important role in translational accuracy. Interacts with and stabilizes bases of the 16S rRNA that are involved in tRNA selection in the A site and with the mRNA backbone. Located at the interface of the 30S and 50S subunits, it traverses the body of the 30S subunit contacting proteins on the other side and probably holding the rRNA structure together. The combined cluster of proteins S8, S12 and S17 appears to hold together the shoulder and platform of the 30S subunit. This Shewanella putrefaciens (strain CN-32 / ATCC BAA-453) protein is Small ribosomal subunit protein uS12.